The sequence spans 49 residues: Large ribosomal subunit protein bL32 (49 aa).

It belongs to the bacterial ribosomal protein bL32 family.

This Helicobacter hepaticus (strain ATCC 51449 / 3B1) protein is Large ribosomal subunit protein bL32.